The following is a 504-amino-acid chain: Anaerobic nitric oxide reductase transcription regulator NorR (504 aa).

A 4-aspartylphosphate modification is found at aspartate 57. One can recognise a Sigma-54 factor interaction domain in the interval 187-416 (MIGLSPGMTQ…LEHAIHRAVV (230 aa)). ATP contacts are provided by residues 215–222 (GETGTGKE) and 278–287 (ADNGTLFLDE). Residues 479-498 (WAACARMLETDVANLHRLAK) constitute a DNA-binding region (H-T-H motif).

It functions in the pathway nitrogen metabolism; nitric oxide reduction. In terms of biological role, required for the expression of anaerobic nitric oxide (NO) reductase, acts as a transcriptional activator for at least the norVW operon. Activation also requires sigma-54. The chain is Anaerobic nitric oxide reductase transcription regulator NorR from Escherichia coli O9:H4 (strain HS).